A 613-amino-acid chain; its full sequence is UvrABC system protein C (613 aa).

The region spanning 20–98 (ERPGVYLMYD…IKRHKPRYNI (79 aa)) is the GIY-YIG domain. One can recognise a UVR domain in the interval 209–244 (FDVIESLGHKMQQASDEFEFEKAALYRDKISALRAI).

This sequence belongs to the UvrC family. In terms of assembly, interacts with UvrB in an incision complex.

The protein resides in the cytoplasm. The UvrABC repair system catalyzes the recognition and processing of DNA lesions. UvrC both incises the 5' and 3' sides of the lesion. The N-terminal half is responsible for the 3' incision and the C-terminal half is responsible for the 5' incision. The protein is UvrABC system protein C of Hydrogenovibrio crunogenus (strain DSM 25203 / XCL-2) (Thiomicrospira crunogena).